The sequence spans 61 residues: Metallothionein-2E (61 aa).

An N-acetylmethionine modification is found at Met-1. Residues Met-1–Cys-29 form a beta region. A divalent metal cation is bound by residues Cys-5, Cys-7, Cys-13, Cys-15, Cys-19, Cys-21, Cys-24, Cys-26, Cys-29, Cys-33, Cys-34, Cys-36, Cys-37, Cys-41, Cys-44, Cys-48, Cys-50, Cys-57, Cys-59, and Cys-60. The interval Lys-30–Ala-61 is alpha.

It belongs to the metallothionein superfamily. Type 1 family. Monomer.

In terms of biological role, metallothioneins have a high content of cysteine residues that bind various heavy metals; these proteins are transcriptionally regulated by both heavy metals and glucocorticoids. The chain is Metallothionein-2E from Oryctolagus cuniculus (Rabbit).